A 450-amino-acid polypeptide reads, in one-letter code: MKTVTEYQNKNVLVLGIAKSGYAAATLLKKLGANVIVNDGKPLAGNVLAAELQAEGMDVVCGGHPLELLERNISLVVKNPGIPYSNPLLVAAKEKQIPIVTEVELAYSISAAPFVGITGSNGKTTTTMLTFEMLKEGQKHPVIAGNIGTVACEVAQLAKENEVVVTELSSFQLMGVESFQPKIAAFLNLFEAHLDYHGTKKEYGLAKANIFKNQTETDYSIINADDADVMALSAYSKGQKVLFSTTKEIEDGAYIKDNALYFKGEKVVKVSDIVLPGKHNLENILAAMSIAKLLGVSNEAITAVLKSFTGVKHRLEYVTTINNRKFYNDSKATNMLATEKALSAFTQPIVLLAGGLDRGNEFDDLIPYFKHVKAIVTFGQTAPKLVRAAEKAGLDVIESVDTLDDAVVKAYAHSTDGDVILLSPACASWDQFKTFEERGDIFIQAVHKLI.

Position 119 to 125 (119 to 125 (GSNGKTT)) interacts with ATP.

Belongs to the MurCDEF family.

It is found in the cytoplasm. The catalysed reaction is UDP-N-acetyl-alpha-D-muramoyl-L-alanine + D-glutamate + ATP = UDP-N-acetyl-alpha-D-muramoyl-L-alanyl-D-glutamate + ADP + phosphate + H(+). It participates in cell wall biogenesis; peptidoglycan biosynthesis. Cell wall formation. Catalyzes the addition of glutamate to the nucleotide precursor UDP-N-acetylmuramoyl-L-alanine (UMA). The polypeptide is UDP-N-acetylmuramoylalanine--D-glutamate ligase (Bacillus mycoides (strain KBAB4) (Bacillus weihenstephanensis)).